The following is a 505-amino-acid chain: MFS-type transporter oryN (505 aa).

Residues 1-54 (MAVAELPNIVSTDSSPSPHPGSRLSSEPTDIESQKAPSNAEPKTDPNLVTWDGP) are disordered. A run of 13 helical transmembrane segments spans residues 69-89 (AFVT…SSIF), 106-126 (VVTL…PVWG), 135-155 (KWPM…VAVA), 166-186 (FLTG…LVDM), 193-213 (GVAM…APLM), 226-246 (FTQW…VFGL), 280-300 (GIKD…VTEP), 301-321 (ILLL…LVFV), 337-357 (ISAL…AIVV), 376-396 (LPLM…FAWT), 401-421 (IHWA…YMVF), 440-460 (IGAN…FGPF), and 468-488 (AWAS…PVLF).

The protein belongs to the major facilitator superfamily. CAR1 family.

Its subcellular location is the membrane. MFS-type transporter; part of the gene cluster that mediates the biosynthesis of oryzines, natural products with an unusual maleidride backbone. This Aspergillus oryzae (strain ATCC 42149 / RIB 40) (Yellow koji mold) protein is MFS-type transporter oryN.